Here is a 611-residue protein sequence, read N- to C-terminus: Leukotriene A-4 hydrolase (611 aa).

Residue Lys-73 is modified to N6-acetyllysine. Residues 135–137 and 267–272 contribute to the a peptide site; these read QCQ and PYGGME. Residue His-296 coordinates Zn(2+). The active-site Proton acceptor is the Glu-297. 2 residues coordinate Zn(2+): His-300 and Glu-319. Lys-337 bears the N6-acetyllysine mark. The Proton donor role is filled by Tyr-384. The residue at position 414 (Lys-414) is an N6-acetyllysine. A Phosphoserine modification is found at Ser-416. An a peptide-binding site is contributed by 564-566; sequence RMK. N6-acetyllysine is present on Lys-573.

The protein belongs to the peptidase M1 family. Monomer. Zn(2+) serves as cofactor. In terms of processing, phosphorylation at Ser-416 inhibits leukotriene-A4 hydrolase activity. As to expression, isoform 1 and isoform 2 are expressed in monocytes, lymphocytes, neutrophils, reticulocytes, platelets and fibroblasts.

Its subcellular location is the cytoplasm. The catalysed reaction is leukotriene A4 + H2O = leukotriene B4. It carries out the reaction (5S,6S)-epoxy-(18R)-hydroxy-(7E,9E,11Z,14Z,16E)-eicosapentaenoate + H2O = resolvin E1. The enzyme catalyses (5S,6S)-epoxy-(18S)-hydroxy-(7E,9E,11Z,14Z,16E)-eicosapentaenoate + H2O = 18S-resolvin E1. It catalyses the reaction Release of the N-terminal residue from a tripeptide.. It functions in the pathway lipid metabolism; leukotriene B4 biosynthesis. With respect to regulation, inhibited by bestatin. The epoxide hydrolase activity is restrained by suicide inactivation that involves binding of LTA4 to Tyr-379. 4-(4-benzylphenyl)thiazol-2-amine (ARM1) selectively inhibits the epoxide hydrolase activity. Bifunctional zinc metalloenzyme that comprises both epoxide hydrolase (EH) and aminopeptidase activities. Acts as an epoxide hydrolase to catalyze the conversion of LTA4 to the pro-inflammatory mediator leukotriene B4 (LTB4). Also has aminopeptidase activity, with high affinity for N-terminal arginines of various synthetic tripeptides. In addition to its pro-inflammatory EH activity, may also counteract inflammation by its aminopeptidase activity, which inactivates by cleavage another neutrophil attractant, the tripeptide Pro-Gly-Pro (PGP), a bioactive fragment of collagen generated by the action of matrix metalloproteinase-9 (MMP9) and prolylendopeptidase (PREPL). Involved also in the biosynthesis of resolvin E1 and 18S-resolvin E1 from eicosapentaenoic acid, two lipid mediators that show potent anti-inflammatory and pro-resolving actions. In Homo sapiens (Human), this protein is Leukotriene A-4 hydrolase (LTA4H).